The following is a 633-amino-acid chain: Probable extracellular metalloproteinase 5 (633 aa).

A signal peptide spans 1–20; it reads MHGLLLAAAGLLSLPLHVLA. Residues 21 to 244 constitute a propeptide that is removed on maturation; that stretch reads HPQPSTNLAG…VHNVVDYVSH (224 aa). Asn-285 carries N-linked (GlcNAc...) asparagine glycosylation. His-428 contacts Zn(2+). The active site involves Glu-429. Residue His-432 participates in Zn(2+) binding. N-linked (GlcNAc...) asparagine glycans are attached at residues Asn-592 and Asn-621.

The protein belongs to the peptidase M36 family. The cofactor is Zn(2+).

It localises to the secreted. In terms of biological role, secreted metalloproteinase probably acting as a virulence factor. This Arthroderma benhamiae (strain ATCC MYA-4681 / CBS 112371) (Trichophyton mentagrophytes) protein is Probable extracellular metalloproteinase 5 (MEP5).